Here is a 180-residue protein sequence, read N- to C-terminus: ATP-dependent protease subunit HslV (180 aa).

T6 is a catalytic residue. Na(+) is bound by residues A164, C167, and T170.

Belongs to the peptidase T1B family. HslV subfamily. In terms of assembly, a double ring-shaped homohexamer of HslV is capped on each side by a ring-shaped HslU homohexamer. The assembly of the HslU/HslV complex is dependent on binding of ATP.

Its subcellular location is the cytoplasm. It carries out the reaction ATP-dependent cleavage of peptide bonds with broad specificity.. With respect to regulation, allosterically activated by HslU binding. Protease subunit of a proteasome-like degradation complex believed to be a general protein degrading machinery. The sequence is that of ATP-dependent protease subunit HslV from Borrelia recurrentis (strain A1).